We begin with the raw amino-acid sequence, 101 residues long: uncharacterized protein (101 aa).

Positions 1-11 (MSDEGYRELVE) are enriched in basic and acidic residues. The segment at 1-26 (MSDEGYRELVESKSAPTTPGPWSPDR) is disordered.

This is an uncharacterized protein from Torque teno canis virus (isolate Cf-TTV10).